The sequence spans 504 residues: MEEFQGYLEIDGYQQHDFLYPLIFREYIYALAHGLNRSILLDNVGYDNKSSLLIIKRLISRMYQQNHLIISANYYKQNKFFGYNKNLYSQIISEGFAVIVEIPFSLRSVSSLEATEKEIIKSYNLRSLHSLFPFLEDKFPHLNYVSDVLIPYPIHLEILVQTLRYWVKDSSSLHLLRLFLHEYYNWNSLITPNKFIFSKSNQRLFLLLYNSHVCEYESILLFLRNQSSHLPLTSYGIFFEKIHFYEKIKYPGDEVFSNDFMVSILWFFKDPFMHYVRYQGKSILASKDTPLMMNKWKYYLVNLWQCHYYVWSQPGRIYINQLSKHSLYFLGYFASMQPNLSVVRSQMLENSFIMDNAMKKLDTLVPIIPLIVSLAKVKFCNALGHPISKSTWTDSSDFDIIDRFVRICRNISHYYSGSSRKKSLYRIKYILRLSCVKTLARKHKSTVRTFLKRLGSKLLEEFFTEEELIRSLIFPRTSYSLKKFYRGRIWYFDIFCINDLVNHE.

It belongs to the intron maturase 2 family. MatK subfamily.

It localises to the plastid. The protein localises to the chloroplast. Usually encoded in the trnK tRNA gene intron. Probably assists in splicing its own and other chloroplast group II introns. The sequence is that of Maturase K from Aruncus dioicus (Goat's beard).